The sequence spans 200 residues: Probable GTP-binding protein EngB (200 aa).

The EngB-type G domain maps to 22–199 (GLDEIALAGR…KDWIQARLYE (178 aa)). Residues 30-37 (GRSNVGKS), 57-61 (GKTQT), 78-81 (DVPG), 145-148 (TKMD), and 178-180 (FSS) each bind GTP. Residues Ser-37 and Thr-59 each contribute to the Mg(2+) site.

Belongs to the TRAFAC class TrmE-Era-EngA-EngB-Septin-like GTPase superfamily. EngB GTPase family. Mg(2+) is required as a cofactor.

Functionally, necessary for normal cell division and for the maintenance of normal septation. The protein is Probable GTP-binding protein EngB of Lactobacillus delbrueckii subsp. bulgaricus (strain ATCC 11842 / DSM 20081 / BCRC 10696 / JCM 1002 / NBRC 13953 / NCIMB 11778 / NCTC 12712 / WDCM 00102 / Lb 14).